A 910-amino-acid chain; its full sequence is UPF0182 protein Acid_6445 (910 aa).

7 consecutive transmembrane segments (helical) span residues 17 to 37, 56 to 76, 101 to 121, 157 to 177, 210 to 229, 252 to 272, and 276 to 296; these read ITLLAILLFLLFGLRSFAGYA, LYYGIAPVAVATLVAFLALWI, LALLFLAWFIAAGAIDTWTVV, LLRSYVLAVIIFCVLLYWIAA, FLRGAAVIGLIALAVRFYLG, IGLPLQWLVIFACLAAAAFVA, and WFLAALMALALVVDFAAPRIV.

The protein belongs to the UPF0182 family.

The protein localises to the cell membrane. This Solibacter usitatus (strain Ellin6076) protein is UPF0182 protein Acid_6445.